The chain runs to 222 residues: Probable transaldolase (222 aa).

Lys-91 acts as the Schiff-base intermediate with substrate in catalysis.

This sequence belongs to the transaldolase family. Type 3B subfamily.

The protein resides in the cytoplasm. It catalyses the reaction D-sedoheptulose 7-phosphate + D-glyceraldehyde 3-phosphate = D-erythrose 4-phosphate + beta-D-fructose 6-phosphate. It participates in carbohydrate degradation; pentose phosphate pathway; D-glyceraldehyde 3-phosphate and beta-D-fructose 6-phosphate from D-ribose 5-phosphate and D-xylulose 5-phosphate (non-oxidative stage): step 2/3. In terms of biological role, transaldolase is important for the balance of metabolites in the pentose-phosphate pathway. This Chlorobaculum tepidum (strain ATCC 49652 / DSM 12025 / NBRC 103806 / TLS) (Chlorobium tepidum) protein is Probable transaldolase.